Reading from the N-terminus, the 320-residue chain is Homoserine kinase (320 aa).

Position 100–110 (100–110 (PLSSGMGSSAA)) interacts with ATP.

Belongs to the GHMP kinase family. Homoserine kinase subfamily.

The protein localises to the cytoplasm. The enzyme catalyses L-homoserine + ATP = O-phospho-L-homoserine + ADP + H(+). It functions in the pathway amino-acid biosynthesis; L-threonine biosynthesis; L-threonine from L-aspartate: step 4/5. Functionally, catalyzes the ATP-dependent phosphorylation of L-homoserine to L-homoserine phosphate. The sequence is that of Homoserine kinase from Chlorobium phaeobacteroides (strain BS1).